The primary structure comprises 937 residues: Translation initiation factor IF-2 (937 aa).

The segment at 47–352 (RAAFQTKATP…EMPQRKERPL (306 aa)) is disordered. Residues 52 to 68 (TKATPAASKPATPAAPK) show a composition bias toward low complexity. Positions 97–116 (QHSNNRPQANANRNGQASNG) are enriched in polar residues. Residues 117-153 (QNRTNNARPNNNSARPNNSRPNTNSRPNNNSQNRSTS) are compositionally biased toward low complexity. Positions 154–169 (ANHPMSLQEQISQANA) are enriched in polar residues. Residues 173–197 (RTQERIQQQREQREADEKKRREQAN) show a composition bias toward basic and acidic residues. Residues 202–229 (TRNNASNNRPSNGKPTNGARPTTNSPRP) show a composition bias toward polar residues. Residues 240-269 (SSRPNNNNSARPNTTNNRPTNSRPATTPSR) show a composition bias toward low complexity. Polar residues predominate over residues 274–298 (QEMQQKMQANTVSASKPASNNTASK). The span at 322–331 (FNKKRKKTRK) shows a compositional bias: basic residues. The segment covering 339 to 352 (AAKKEMPQRKERPL) has biased composition (basic and acidic residues). The tr-type G domain occupies 438-607 (SRPPVVTIMG…LLEADVLELK (170 aa)). A G1 region spans residues 447-454 (GHVDHGKT). 447-454 (GHVDHGKT) contacts GTP. The interval 472–476 (GITQH) is G2. Residues 493 to 496 (DTPG) are G3. GTP is bound by residues 493-497 (DTPGH) and 547-550 (NKID). The segment at 547–550 (NKID) is G4. The interval 583–585 (SAK) is G5.

Belongs to the TRAFAC class translation factor GTPase superfamily. Classic translation factor GTPase family. IF-2 subfamily.

The protein resides in the cytoplasm. In terms of biological role, one of the essential components for the initiation of protein synthesis. Protects formylmethionyl-tRNA from spontaneous hydrolysis and promotes its binding to the 30S ribosomal subunits. Also involved in the hydrolysis of GTP during the formation of the 70S ribosomal complex. The chain is Translation initiation factor IF-2 from Latilactobacillus sakei subsp. sakei (strain 23K) (Lactobacillus sakei subsp. sakei).